The following is a 165-amino-acid chain: Nucleotide-binding protein Syncc9605_0652 (165 aa).

The protein belongs to the YajQ family.

In terms of biological role, nucleotide-binding protein. This Synechococcus sp. (strain CC9605) protein is Nucleotide-binding protein Syncc9605_0652.